Reading from the N-terminus, the 347-residue chain is NADH-ubiquinone oxidoreductase chain 2 (347 aa).

10 helical membrane passes run 3–23, 25–45, 59–79, 111–131, 149–169, 178–198, 201–221, 242–262, 274–294, and 325–345; these read PIVF…VMMS, HWLM…PILM, YFLT…INLM, FHFW…LILL, INLD…GWGG, IMAY…TYNP, TMLN…LLML, SLIL…GFIP, NSII…YFYL, and LLPT…TMSI.

The protein belongs to the complex I subunit 2 family. In terms of assembly, core subunit of respiratory chain NADH dehydrogenase (Complex I) which is composed of 45 different subunits. Interacts with TMEM242.

The protein localises to the mitochondrion inner membrane. It catalyses the reaction a ubiquinone + NADH + 5 H(+)(in) = a ubiquinol + NAD(+) + 4 H(+)(out). Functionally, core subunit of the mitochondrial membrane respiratory chain NADH dehydrogenase (Complex I) which catalyzes electron transfer from NADH through the respiratory chain, using ubiquinone as an electron acceptor. Essential for the catalytic activity and assembly of complex I. The polypeptide is NADH-ubiquinone oxidoreductase chain 2 (Rhinoceros unicornis (Greater Indian rhinoceros)).